Reading from the N-terminus, the 247-residue chain is MQYNFKVEAFEGPLDLLLHLIHRYEIDIYNIPVAEITEQYLSYVHTMKELQLDVASEYLVMAATLLQIKSKMLLPKHEEDVLDNGDDFIDDPRQELMERLIEYKKYKQVATELKEREQERAQLYTRPPIDFTSLQQEEETSLPLDVTLYDMLAAFQKLMRRKKAKKPVTTRITRQEIPIEQRMTDILKQLEIQGGRQSFYDLFVDDEREIMVVTFLAVLELMKNQQIVIEQEHNFDEIFVSSYTKSA.

The protein belongs to the ScpA family. Component of a cohesin-like complex composed of ScpA, ScpB and the Smc homodimer, in which ScpA and ScpB bind to the head domain of Smc. The presence of the three proteins is required for the association of the complex with DNA.

Its subcellular location is the cytoplasm. Participates in chromosomal partition during cell division. May act via the formation of a condensin-like complex containing Smc and ScpB that pull DNA away from mid-cell into both cell halves. The polypeptide is Segregation and condensation protein A (Bacillus cereus (strain ATCC 10987 / NRS 248)).